A 180-amino-acid chain; its full sequence is Cancer/testis antigen 1 (180 aa).

Gly residues-rich tracts occupy residues 1 to 47 (MQAE…GPRG) and 55 to 66 (GPGGGAPRGPHG). A disordered region spans residues 1–66 (MQAEGRGTGG…GGGAPRGPHG (66 aa)).

It belongs to the CTAG/PCC1 family. Expressed in testis and ovary and in a wide variety of cancers. Detected in uterine myometrium. Expressed from 18 weeks until birth in human fetal testis. In the adult testis, is strongly expressed in spermatogonia and in primary spermatocytes, but not in post-meiotic cells or in testicular somatic cells (at protein level).

It localises to the cytoplasm. The chain is Cancer/testis antigen 1 (CTAG1A) from Homo sapiens (Human).